A 740-amino-acid polypeptide reads, in one-letter code: MSENQVLIREISLGGRTLTLETGRMAKQASGAVLVTYGETVVLVTATVAKNTRDIDFFPLTVDYEERLYAVGKIPGGFIKREGRPSEKAILSGRLIDRPIRPLFPKHMRNEVQVVATVMSVDQDNAPEIAAMIGASAALHISKIPLKKPIGGVIVGRVDGQFVINPMVRQAENSDMHLVVAGTDDAVMMVEAGAKEVPESEMLEGIMYGHEKVKEIVKFIEDFRTEALGMGLAFEKMEIPEPQFDSNMSEAILTIAEEAIREAVLHCSREKLTKKQREVYMDEVMSGLQEKFLEQFPENPKEVTMLIEKAEKKVVRRIITHDKLRIDGRAIDEIRPISVEVGVLPRTHGTGLFTRGQTQILSVATLGSISEEQILDGLGVEESKRYMHHYNFPPFSTGETKPMRSPGRREIGHGALAERALEPMIPPEEVFPYTIRVVSEAIESNGSTSMGSVCGSTLSLMDAGVPLKAPVAGVAMGLIMEEDQFTVLTDIQGLEDHLGDMDFKVAGSANGVTALQMDIKIPGITREVFEQALEQAHRGRMFILGKMLEVLSTPRAEISVHAPAIIRTSIHPDKIRDIIGPGGKIIKKLVEETGADIDIEDDGRVFIAAVDREKGKRALEIIQSITAEVQVGKLYNGKVTRVTDFGCFVEVIPGVMGLPGKEGLVHISQLAFQRVEKTEDIVKEGEVIAVKAIGYDQQGRLKLSKKEAMRDMGLAPAESTSEQPEKRERRPFSRPKATKE.

Mg(2+) is bound by residues aspartate 496 and aspartate 502. One can recognise a KH domain in the interval 563-622 (PAIIRTSIHPDKIRDIIGPGGKIIKKLVEETGADIDIEDDGRVFIAAVDREKGKRALEII). An S1 motif domain is found at 632–706 (GKLYNGKVTR…QQGRLKLSKK (75 aa)). A disordered region spans residues 707–740 (EAMRDMGLAPAESTSEQPEKRERRPFSRPKATKE). The span at 723-740 (QPEKRERRPFSRPKATKE) shows a compositional bias: basic and acidic residues.

This sequence belongs to the polyribonucleotide nucleotidyltransferase family. Requires Mg(2+) as cofactor.

Its subcellular location is the cytoplasm. The enzyme catalyses RNA(n+1) + phosphate = RNA(n) + a ribonucleoside 5'-diphosphate. Its function is as follows. Involved in mRNA degradation. Catalyzes the phosphorolysis of single-stranded polyribonucleotides processively in the 3'- to 5'-direction. This chain is Polyribonucleotide nucleotidyltransferase, found in Desulforamulus reducens (strain ATCC BAA-1160 / DSM 100696 / MI-1) (Desulfotomaculum reducens).